A 132-amino-acid chain; its full sequence is Small ribosomal subunit protein uS8 (132 aa).

This sequence belongs to the universal ribosomal protein uS8 family. As to quaternary structure, part of the 30S ribosomal subunit. Contacts proteins S5 and S12.

In terms of biological role, one of the primary rRNA binding proteins, it binds directly to 16S rRNA central domain where it helps coordinate assembly of the platform of the 30S subunit. This chain is Small ribosomal subunit protein uS8, found in Nitrobacter winogradskyi (strain ATCC 25391 / DSM 10237 / CIP 104748 / NCIMB 11846 / Nb-255).